A 242-amino-acid chain; its full sequence is 6-carboxyhexanoate--CoA ligase (242 aa).

Belongs to the BioW family. Homodimer. Requires Mg(2+) as cofactor.

The catalysed reaction is heptanedioate + ATP + CoA = 6-carboxyhexanoyl-CoA + AMP + diphosphate. Its pathway is metabolic intermediate metabolism; pimeloyl-CoA biosynthesis; pimeloyl-CoA from pimelate: step 1/1. Catalyzes the transformation of pimelate into pimeloyl-CoA with concomitant hydrolysis of ATP to AMP. In Veillonella parvula (strain ATCC 10790 / DSM 2008 / CCUG 5123 / JCM 12972 / NCTC 11810 / Te3) (Veillonella alcalescens), this protein is 6-carboxyhexanoate--CoA ligase.